Here is a 591-residue protein sequence, read N- to C-terminus: DNA ligase (591 aa).

Residues 38–42 (DEKYD), 87–88 (SL), and E119 each bind NAD(+). Catalysis depends on K121, which acts as the N6-AMP-lysine intermediate. NAD(+) contacts are provided by R142, E181, K298, and K322. 4 residues coordinate Zn(2+): C415, C418, C433, and C439.

The protein belongs to the NAD-dependent DNA ligase family. LigA subfamily. It depends on Mg(2+) as a cofactor. The cofactor is Mn(2+).

It carries out the reaction NAD(+) + (deoxyribonucleotide)n-3'-hydroxyl + 5'-phospho-(deoxyribonucleotide)m = (deoxyribonucleotide)n+m + AMP + beta-nicotinamide D-nucleotide.. Its function is as follows. DNA ligase that catalyzes the formation of phosphodiester linkages between 5'-phosphoryl and 3'-hydroxyl groups in double-stranded DNA using NAD as a coenzyme and as the energy source for the reaction. It is essential for DNA replication and repair of damaged DNA. The chain is DNA ligase from Wigglesworthia glossinidia brevipalpis.